The primary structure comprises 263 residues: Orotidine 5'-phosphate decarboxylase (263 aa).

Substrate contacts are provided by residues D38, 60 to 62, 91 to 100, Y213, and R232; these read KTH and DRKFADIGNT. The active-site Proton donor is the K93.

This sequence belongs to the OMP decarboxylase family.

It carries out the reaction orotidine 5'-phosphate + H(+) = UMP + CO2. The protein operates within pyrimidine metabolism; UMP biosynthesis via de novo pathway; UMP from orotate: step 2/2. The chain is Orotidine 5'-phosphate decarboxylase (PYR4) from Rhizomucor pusillus.